Consider the following 480-residue polypeptide: F-box only protein 3 (480 aa).

In terms of domain architecture, F-box spans 10-56; the sequence is LLTLESLPTDPLLLILSFVDYRDLINCCYVSRRLSQLSTHDPLWRRH. One can recognise an ApaG domain in the interval 278-408; the sequence is VATTGDITVS…FHMACPTFRV (131 aa). Residues 419–458 show a composition bias toward acidic residues; the sequence is EYEEMEEEAEEEEEEENDDSADMDESDESDADENESDEGE. Residues 419–463 are disordered; that stretch reads EYEEMEEEAEEEEEEENDDSADMDESDESDADENESDEGEGEARR.

Part of a SCF (SKP1-cullin-F-box) protein ligase complex SCF(FBXO3) consisting of FBXO3, SKP1, CUL1 and RBX1. Interacts with PML, interaction is direct and takes place either alone or within the SCF complex.

It localises to the nucleus. Its pathway is protein modification; protein ubiquitination. In terms of biological role, substrate recognition component of the SCF (SKP1-CUL1-F-box protein)-type E3 ubiquitin ligase complex, SCF(FBXO3), which mediates the ubiquitination and subsequent proteasomal degradation of target proteins. Mediates the ubiquitination of HIPK2 and probably that of EP300, leading to rapid degradation by the proteasome. In the presence of PML, HIPK2 ubiquitination still occurs, but degradation is prevented. PML, HIPK2 and FBXO3 may act synergically to activate p53/TP53-dependent transactivation. The SCF(FBXO3) also acts as a regulator of inflammation by mediating ubiquitination and degradation of FBXL2: specifically recognizes FBXL2 phosphorylated at 'Thr-404' and promotes its ubiquitination. In Mus musculus (Mouse), this protein is F-box only protein 3 (Fbxo3).